The primary structure comprises 263 residues: Acyl-[acyl-carrier-protein]--UDP-N-acetylglucosamine O-acyltransferase (263 aa).

The protein belongs to the transferase hexapeptide repeat family. LpxA subfamily. In terms of assembly, homotrimer.

The protein localises to the cytoplasm. The catalysed reaction is a (3R)-hydroxyacyl-[ACP] + UDP-N-acetyl-alpha-D-glucosamine = a UDP-3-O-[(3R)-3-hydroxyacyl]-N-acetyl-alpha-D-glucosamine + holo-[ACP]. It functions in the pathway glycolipid biosynthesis; lipid IV(A) biosynthesis; lipid IV(A) from (3R)-3-hydroxytetradecanoyl-[acyl-carrier-protein] and UDP-N-acetyl-alpha-D-glucosamine: step 1/6. In terms of biological role, involved in the biosynthesis of lipid A, a phosphorylated glycolipid that anchors the lipopolysaccharide to the outer membrane of the cell. The protein is Acyl-[acyl-carrier-protein]--UDP-N-acetylglucosamine O-acyltransferase of Campylobacter jejuni subsp. jejuni serotype O:2 (strain ATCC 700819 / NCTC 11168).